A 129-amino-acid polypeptide reads, in one-letter code: Glycine cleavage system H protein (129 aa).

A Lipoyl-binding domain is found at 24–106; that stretch reads TYTVGITEHA…YAGGWIFKIK (83 aa). Lys-65 carries the post-translational modification N6-lipoyllysine.

The protein belongs to the GcvH family. In terms of assembly, the glycine cleavage system is composed of four proteins: P, T, L and H. It depends on (R)-lipoate as a cofactor.

The glycine cleavage system catalyzes the degradation of glycine. The H protein shuttles the methylamine group of glycine from the P protein to the T protein. The sequence is that of Glycine cleavage system H protein from Escherichia fergusonii (strain ATCC 35469 / DSM 13698 / CCUG 18766 / IAM 14443 / JCM 21226 / LMG 7866 / NBRC 102419 / NCTC 12128 / CDC 0568-73).